Reading from the N-terminus, the 233-residue chain is Lipoprotein-releasing system ATP-binding protein LolD (233 aa).

The ABC transporter domain maps to 6–233 (LQCDNLCKRY…TAELSLMGAE (228 aa)). Position 42 to 49 (42 to 49 (GSSGSGKS)) interacts with ATP.

Belongs to the ABC transporter superfamily. Lipoprotein translocase (TC 3.A.1.125) family. In terms of assembly, the complex is composed of two ATP-binding proteins (LolD) and two transmembrane proteins (LolC and LolE).

The protein resides in the cell inner membrane. Its function is as follows. Part of the ABC transporter complex LolCDE involved in the translocation of mature outer membrane-directed lipoproteins, from the inner membrane to the periplasmic chaperone, LolA. Responsible for the formation of the LolA-lipoprotein complex in an ATP-dependent manner. Such a release is dependent of the sorting-signal (absence of an Asp at position 2 of the mature lipoprotein) and of LolA. This chain is Lipoprotein-releasing system ATP-binding protein LolD, found in Escherichia coli (strain K12).